The sequence spans 198 residues: Crinkler effector protein BLC01 (198 aa).

Residues 1–15 (MMVKLICAIVDIAGA) form the signal peptide. The tract at residues 16-55 (AFPIDIDTNELVGDFKKVIKAENSRTIACDANDLRLFLAK) is LQLFLAK domain. Residues 56 to 113 (TDGRWLTEFEVQNGVADISVFEELDVVGAPLNMIGLSEETVSSVAITKELVKAKKTPL) are DWL domain. An HVLVXXP motif motif is present at residues 114-119 (HVLVVP).

This sequence belongs to the Crinkler effector family.

The protein resides in the secreted. It is found in the host cell. Functionally, secreted effector that elicits necrosis in host plants, a characteristic of plant innate immunity. In Bremia lactucae (Lettuce downy mildew), this protein is Crinkler effector protein BLC01.